Reading from the N-terminus, the 231-residue chain is ATP-dependent dethiobiotin synthetase BioD (231 aa).

Aspartate 12–valine 17 serves as a coordination point for ATP. Threonine 16 is a Mg(2+) binding site. Lysine 37 is a catalytic residue. Threonine 41 provides a ligand contact to substrate. Residues aspartate 50, glutamate 109–glycine 112, glycine 170–serine 171, and proline 200–glycine 202 each bind ATP. Aspartate 50 and glutamate 109 together coordinate Mg(2+).

It belongs to the dethiobiotin synthetase family. In terms of assembly, homodimer. Mg(2+) serves as cofactor.

It is found in the cytoplasm. The enzyme catalyses (7R,8S)-7,8-diammoniononanoate + CO2 + ATP = (4R,5S)-dethiobiotin + ADP + phosphate + 3 H(+). It participates in cofactor biosynthesis; biotin biosynthesis; biotin from 7,8-diaminononanoate: step 1/2. In terms of biological role, catalyzes a mechanistically unusual reaction, the ATP-dependent insertion of CO2 between the N7 and N8 nitrogen atoms of 7,8-diaminopelargonic acid (DAPA, also called 7,8-diammoniononanoate) to form a ureido ring. This Rhodococcus jostii (strain RHA1) protein is ATP-dependent dethiobiotin synthetase BioD.